The following is a 164-amino-acid chain: Protein-export protein SecB (164 aa).

This sequence belongs to the SecB family. As to quaternary structure, homotetramer, a dimer of dimers. One homotetramer interacts with 1 SecA dimer.

It is found in the cytoplasm. Its function is as follows. One of the proteins required for the normal export of preproteins out of the cell cytoplasm. It is a molecular chaperone that binds to a subset of precursor proteins, maintaining them in a translocation-competent state. It also specifically binds to its receptor SecA. This is Protein-export protein SecB from Zymomonas mobilis subsp. mobilis (strain ATCC 31821 / ZM4 / CP4).